Reading from the N-terminus, the 493-residue chain is MIPVVALVGRPNVGKSTLFNRLTRTRDALVADFPGLTRDRKYGRAEVEGQEFIIIDTGGIDGTEDGVETHMAAQSLLAIEEADIVLFMVDARAGLMPADHAIAKHLRGREKATFLVANKTDGVDIDTAIAEFYSLGLGDIYSIAASHGRGVTQLIERVLLPFSGKGEEEVVELTEEEANAAYWAEQEQNEIEMVEEEEDFDPSTLPLKLAIVGKPNVGKSTLTNRILGEERVVVYDMPGTTRDSIYIPMERDGREYILIDTAGVRKRGKITETVEKFSVIKTLQAIEDANVVLLVIDAREGISDQDLSLLGFILNSGRSLVIAVNKWDGMSQEDKERVKEMLDYRLGFVDFARVHFISALHGSGVGNLFDSILEAYDCATRRVNTSLLTRIMHMAEEDHQPPMIRGRRVKMKYAHAGGYNPPIVVIHGNQVTDLPDSYKRYLMNYFRRSLKVMGTPIRIQFKEGANPYADKRNTLTPNQMRKRKRLMAHLKKR.

EngA-type G domains are found at residues 3–166 and 207–380; these read PVVA…SGKG and LKLA…DCAT. Residues 9–16, 56–60, 118–121, 213–220, 260–264, and 325–328 contribute to the GTP site; these read GRPNVGKS, DTGGI, NKTD, GKPNVGKS, DTAGV, and NKWD. The region spanning 381 to 465 is the KH-like domain; sequence RRVNTSLLTR…PIRIQFKEGA (85 aa).

This sequence belongs to the TRAFAC class TrmE-Era-EngA-EngB-Septin-like GTPase superfamily. EngA (Der) GTPase family. As to quaternary structure, associates with the 50S ribosomal subunit.

GTPase that plays an essential role in the late steps of ribosome biogenesis. The chain is GTPase Der from Photorhabdus laumondii subsp. laumondii (strain DSM 15139 / CIP 105565 / TT01) (Photorhabdus luminescens subsp. laumondii).